The sequence spans 190 residues: Guanylate kinase (190 aa).

The 183-residue stretch at 3 to 185 folds into the Guanylate kinase-like domain; it reads NYIFIISAPS…SLEQLCKYFE (183 aa). Residue 10 to 17 coordinates ATP; the sequence is APSGAGKS.

The protein belongs to the guanylate kinase family.

Its subcellular location is the cytoplasm. It carries out the reaction GMP + ATP = GDP + ADP. Its function is as follows. Essential for recycling GMP and indirectly, cGMP. In Francisella tularensis subsp. holarctica (strain OSU18), this protein is Guanylate kinase.